A 209-amino-acid chain; its full sequence is Large ribosomal subunit protein uL3 (209 aa).

A disordered region spans residues 117 to 142 (FQGPIKRHGQSRGPETHGSRYHRRPG).

Belongs to the universal ribosomal protein uL3 family. Part of the 50S ribosomal subunit. Forms a cluster with proteins L14 and L19.

Its function is as follows. One of the primary rRNA binding proteins, it binds directly near the 3'-end of the 23S rRNA, where it nucleates assembly of the 50S subunit. This chain is Large ribosomal subunit protein uL3, found in Clostridioides difficile (strain 630) (Peptoclostridium difficile).